A 193-amino-acid chain; its full sequence is Molybdopterin synthase catalytic subunit (193 aa).

Substrate contacts are provided by residues histidine 118–arginine 119, lysine 134, and lysine 141–glutamate 143. The tract at residues aspartate 159–serine 193 is disordered. Residues threonine 163–alanine 178 show a composition bias toward low complexity.

This sequence belongs to the MoaE family. MOCS2B subfamily. Heterotetramer; composed of 2 small (MOCS2A) and 2 large (MOCS2B) subunits.

It localises to the cytoplasm. It carries out the reaction 2 [molybdopterin-synthase sulfur-carrier protein]-C-terminal-Gly-aminoethanethioate + cyclic pyranopterin phosphate + H2O = molybdopterin + 2 [molybdopterin-synthase sulfur-carrier protein]-C-terminal Gly-Gly + 2 H(+). Its pathway is cofactor biosynthesis; molybdopterin biosynthesis. Catalytic subunit of the molybdopterin synthase complex, a complex that catalyzes the conversion of precursor Z into molybdopterin. Acts by mediating the incorporation of 2 sulfur atoms from thiocarboxylated MOCS2A into precursor Z to generate a dithiolene group. This Oryza sativa subsp. indica (Rice) protein is Molybdopterin synthase catalytic subunit.